The primary structure comprises 625 residues: RalA-binding protein 1 (625 aa).

Basic and acidic residues-rich tracts occupy residues 1 to 11 (MDFDSPEEKEF) and 20 to 60 (ADAK…KDRG). A disordered region spans residues 1–172 (MDFDSPEEKE…SKQLSQQQDD (172 aa)). Serine 68 and serine 69 each carry phosphoserine. Residues 94–157 (KSKEKREKSR…EKDKKADKKD (64 aa)) show a composition bias toward basic and acidic residues. In terms of domain architecture, Rho-GAP spans 191-385 (VSLATERSRC…PLTSTSPKLP (195 aa)). The disordered stretch occupies residues 443–500 (QEKTAEEVDNSSSAPPAVASEDTTDSKPAGTPAVSTNNSISQEEPKTDTLTPKDAPND). Positions 475 to 484 (AVSTNNSISQ) are enriched in polar residues.

In terms of assembly, interacts with CycB and numb.

Functionally, participates in receptor endocytosis during interphase, is also involved in mitotic processes when endocytosis is switched off. This chain is RalA-binding protein 1, found in Drosophila melanogaster (Fruit fly).